We begin with the raw amino-acid sequence, 323 residues long: E3 ubiquitin-protein ligase makorin (323 aa).

2 consecutive C3H1-type zinc fingers follow at residues 1 to 28 and 29 to 56; these read MSDR…HDSK and DPPN…HVRA. Residues 62–74 are compositionally biased toward low complexity; sequence LSSDSESLDRSIS. The disordered stretch occupies residues 62-92; it reads LSSDSESLDRSISTTPSRHLQQQGDNNDGDK. The span at 75 to 87 shows a compositional bias: polar residues; it reads TTPSRHLQQQGDN. Residues 101–128 form a C3H1-type 3 zinc finger; that stretch reads PREYPICSFAAAGDCPRGNQCPHMHGDL. The segment at 129–158 is makorin-type Cys-His; that stretch reads CNTCGKKCLHPFRPEEREEHTKECEKKQKH. The RING-type zinc-finger motif lies at 170–228; the sequence is CSVCLDRILSKATPGERKFGLLTECDHPFCIQCIRNWRSSAPVSGMDVNSTLRACPICR. The C3H1-type 4 zinc finger occupies 257–286; it reads KLRSIDCKHFNFGNGNCPFGASCFYKHAYS.

It catalyses the reaction S-ubiquitinyl-[E2 ubiquitin-conjugating enzyme]-L-cysteine + [acceptor protein]-L-lysine = [E2 ubiquitin-conjugating enzyme]-L-cysteine + N(6)-ubiquitinyl-[acceptor protein]-L-lysine.. The protein operates within protein modification; protein ubiquitination. Functionally, E3 ubiquitin ligase catalyzing the covalent attachment of ubiquitin moieties onto substrate proteins. In Arabidopsis thaliana (Mouse-ear cress), this protein is E3 ubiquitin-protein ligase makorin (MKRN).